The primary structure comprises 290 residues: Ankyrin repeat and SOCS box protein 9 (290 aa).

Met-1 is modified (N-acetylmethionine). Residues 1-11 show a composition bias toward basic and acidic residues; it reads MDGEQRGRSDR. The disordered stretch occupies residues 1-20; it reads MDGEQRGRSDRPGGSPHLPF. 6 ANK repeats span residues 31-60, 64-93, 97-126, 129-158, 162-191, and 194-223; these read SDWS…PVNI, DHVS…QVNG, DWRT…TPHP, ELAS…NIDY, HLGT…SVNQ, and GLDS…NAQA. In terms of domain architecture, SOCS box spans 236-290; sequence PLESPLIQIFLQNEGPQSLRQLCRLRIRKCFGIRQHHKISELLLPEDLKRFLLHL.

It belongs to the ankyrin SOCS box (ASB) family. Substrate-recognition component of the ECS(ASB9) complex, composed of ASB9, CUL5, ELOB, ELOC and RNF7/RBX2.

It is found in the mitochondrion. It functions in the pathway protein modification; protein ubiquitination. Functionally, substrate-recognition component of a cullin-5-RING E3 ubiquitin-protein ligase complex (ECS complex, also named CRL5 complex), which mediates the ubiquitination and subsequent proteasomal degradation of target proteins. The ECS(ASB9) complex catalyzes ubiquitination of creatine kinases CKB and CKMT1A. In Mus musculus (Mouse), this protein is Ankyrin repeat and SOCS box protein 9.